We begin with the raw amino-acid sequence, 428 residues long: Adenylosuccinate synthetase (428 aa).

GTP-binding positions include 12-18 (GDEGKGK) and 40-42 (GHT). Asp13 (proton acceptor) is an active-site residue. Mg(2+) is bound by residues Asp13 and Gly40. Residues 13-16 (DEGK), 38-41 (NAGH), Thr128, Arg142, Gln223, Thr238, and Arg302 each bind IMP. His41 functions as the Proton donor in the catalytic mechanism. 298 to 304 (TTTGRPR) is a binding site for substrate. GTP is bound by residues Arg304, 330–332 (KLD), and 412–414 (GVG).

It belongs to the adenylosuccinate synthetase family. As to quaternary structure, homodimer. The cofactor is Mg(2+).

It is found in the cytoplasm. It carries out the reaction IMP + L-aspartate + GTP = N(6)-(1,2-dicarboxyethyl)-AMP + GDP + phosphate + 2 H(+). Its pathway is purine metabolism; AMP biosynthesis via de novo pathway; AMP from IMP: step 1/2. In terms of biological role, plays an important role in the de novo pathway of purine nucleotide biosynthesis. Catalyzes the first committed step in the biosynthesis of AMP from IMP. In Kineococcus radiotolerans (strain ATCC BAA-149 / DSM 14245 / SRS30216), this protein is Adenylosuccinate synthetase.